We begin with the raw amino-acid sequence, 128 residues long: RxLR effector protein SFI2 (128 aa).

Residues 1–22 (MRSAFYIFLVVAVLARCSVVAA) form the signal peptide. A RxLR-dEER motif is present at residues 52 to 71 (RLLRVAGREDDDATTDEEDR).

The protein belongs to the RxLR effector family.

Its subcellular location is the secreted. It is found in the host nucleus. Its function is as follows. Effector that suppresses flg22-induced post-translational MAP kinase activation both tomato and Arabidopsis. The perception of highly conserved pathogen- or microbe-associated molecular patterns (PAMPs/MAMPs), such as flg22, triggers converging signaling pathways recruiting MAP kinase cascades and inducing transcriptional re-programming, yielding a generic antimicrobial response. This is RxLR effector protein SFI2 from Phytophthora infestans (strain T30-4) (Potato late blight agent).